We begin with the raw amino-acid sequence, 425 residues long: Sensor histidine kinase NarS (425 aa).

A run of 6 helical transmembrane segments spans residues 42-62 (IASV…VVGT), 71-91 (IVLI…AYSA), 107-127 (LEPF…QLLS), 130-150 (GIYP…DVST), 155-175 (VVLA…PVML), and 181-201 (PETI…LMVV). One can recognise a Histidine kinase domain in the interval 224–425 (QTMTASEVLQ…HVCVELPLKR (202 aa)). His241 carries the phosphohistidine; by autocatalysis modification.

In terms of processing, autophosphorylated on His-241.

The protein resides in the cell membrane. The catalysed reaction is ATP + protein L-histidine = ADP + protein N-phospho-L-histidine.. In terms of biological role, member of the two-component regulatory system NarS/NarL involved in gene expression during aerobic nitrate metabolism. Plays therefore a crucial role in anaerobic survival of mycobacteria in host. Functions as a sensor protein kinase which is autophosphorylated at a histidine residue and transfers its phosphate group to the conserved aspartic acid residue in the regulatory domain of NarL. In turn, NarL binds to the upstream promoter regions of target genes to regulate their expression during aerobic nitrate metabolism. The sequence is that of Sensor histidine kinase NarS from Mycobacterium tuberculosis (strain ATCC 25618 / H37Rv).